A 640-amino-acid chain; its full sequence is Threonine--tRNA ligase (640 aa).

The region spanning 1-59 (MKIKVKLPDGKEKEYDRGITPAEIAKELGVKKAIGAVVNGELWDLKRPIENDCELRLVT) is the TGS domain. Residues 240–531 (DHRKLGPHLE…LIEHFAGAFP (292 aa)) form a catalytic region. Residues Cys-332, His-383, and His-508 each coordinate Zn(2+).

Belongs to the class-II aminoacyl-tRNA synthetase family. Homodimer. The cofactor is Zn(2+).

The protein resides in the cytoplasm. The enzyme catalyses tRNA(Thr) + L-threonine + ATP = L-threonyl-tRNA(Thr) + AMP + diphosphate + H(+). Its function is as follows. Catalyzes the attachment of threonine to tRNA(Thr) in a two-step reaction: L-threonine is first activated by ATP to form Thr-AMP and then transferred to the acceptor end of tRNA(Thr). Also edits incorrectly charged L-seryl-tRNA(Thr). The chain is Threonine--tRNA ligase from Thermotoga petrophila (strain ATCC BAA-488 / DSM 13995 / JCM 10881 / RKU-1).